We begin with the raw amino-acid sequence, 167 residues long: uncharacterized protein (167 aa).

Residues 5-27 form a helical membrane-spanning segment; that stretch reads LILLTFVSFVFSKTFYYDVYVFF.

It localises to the membrane. This is an uncharacterized protein from Aquifex aeolicus (strain VF5).